The primary structure comprises 461 residues: Diacylglycerol O-acyltransferase 1 (461 aa).

The disordered stretch occupies residues 1 to 38 (MQDSMDDSLREAEGRQDDSEVSSGTTLGSSTPEDSGVT). Over 1 to 112 (MQDSMDDSLR…TLVVAWHTSS (112 aa)) the chain is Cytoplasmic. Residues 7–18 (DSLREAEGRQDD) show a composition bias toward basic and acidic residues. Polar residues predominate over residues 21–33 (VSSGTTLGSSTPE). The helical transmembrane segment at 113–133 (FIYMTVLVLFLAANPLMWWFM) threads the bilayer. Residues 134–230 (VPYMVYYVWN…ARPQVATGPR (97 aa)) lie on the Lumenal side of the membrane. A helical transmembrane segment spans residues 231–251 (YIFGYHPHGVGALGAFGAIAT). The Cytoplasmic portion of the chain corresponds to 252-258 (EGCNWSK). Residues 259-279 (VFAGIPACLCTLVNQFQIPIY) form a helical membrane-spanning segment. Residues 280-332 (RDYLLGLGCTSVARKNVLKVLEQNYSVCIVVGGAQEALLSRVGSTELVLNKRK) lie on the Lumenal side of the membrane. Residues 333–353 (GFIKLALETGNVNLVPIYAFG) form a helical membrane-spanning segment. The Cytoplasmic portion of the chain corresponds to 354 to 461 (ETDCFNVLDT…YAGKELKIVE (108 aa)).

It belongs to the diacylglycerol acyltransferase family.

The protein localises to the lipid droplet. The protein resides in the endoplasmic reticulum membrane. It carries out the reaction an acyl-CoA + a 1,2-diacyl-sn-glycerol = a triacyl-sn-glycerol + CoA. The enzyme catalyses a 2-acylglycerol + an acyl-CoA = a 1,2-diacyl-sn-glycerol + CoA. Its pathway is glycerolipid metabolism; triacylglycerol biosynthesis. Catalyzes the terminal and only committed step in triacylglycerol (TAG) synthesis by using diacylglycerol (DAG) and fatty acyl-CoA as substrates. Required for storage lipid synthesis. Major DAG esterifying enzyme in stationary phase when TAG production is particularly active. Involved in lipid particle synthesis from the endoplasmic reticulum, promoting localized TAG production at discrete ER subdomains. The chain is Diacylglycerol O-acyltransferase 1 (DGA1) from Eremothecium gossypii (strain ATCC 10895 / CBS 109.51 / FGSC 9923 / NRRL Y-1056) (Yeast).